An 853-amino-acid chain; its full sequence is FIGNL1-interacting regulator of recombination and mitosis (853 aa).

Residues Ser-43 and Ser-744 each carry the phosphoserine; by PLK1 modification. Lys-792 is subject to N6-acetyllysine.

As to quaternary structure, interacts (via its N-terminal region) with PLK1; controls PLK1 kinase activity. Interacts (via the KVVXF motif) with PPP1CC; controls PLK1 kinase activity. Interacts with FIGNL1; may regulate homologous recombination. Phosphorylation at Ser-43 by PLK1 strengthens FIRRM-PLK1 interaction. Phosphorylation at Ser-744 by PLK1 negatively regulates its interaction with PPP1CC.

The protein resides in the chromosome. It localises to the centromere. The protein localises to the kinetochore. It is found in the nucleus. Its subcellular location is the midbody. The protein resides in the cytoplasm. It localises to the cytoskeleton. The protein localises to the spindle. Its function is as follows. Regulates PLK1 kinase activity at kinetochores and promotes faithful chromosome segregation in prometaphase by bridging kinase and phosphatase activities. Phosphorylation of FIRRM by PLK1 negatively regulates its interaction with the phosphatase, PPP1CC, thus creating a negative feedback loop for maintaining proper PLK1 kinase activity during mitosis. In complex with FIGL1 may regulate homologous recombination. This chain is FIGNL1-interacting regulator of recombination and mitosis, found in Homo sapiens (Human).